A 77-amino-acid chain; its full sequence is Antitoxin VapB2 (77 aa).

The region spanning 4 to 46 (ASVFMTNRSQAVRLPAEVRFSEEIKKLSVRVSGSDRILSPLNQ) is the SpoVT-AbrB domain.

This sequence belongs to the VapB family. Probably forms a complex with cognate toxin VapC2.

Antitoxin component of a type II toxin-antitoxin (TA) system. Neutralizes the effect of cognate toxin VapC2 but not non-cognate toxin VapC2. The polypeptide is Antitoxin VapB2 (Haemophilus influenzae (strain 86-028NP)).